A 467-amino-acid chain; its full sequence is Coiled-coil domain-containing protein 174 (467 aa).

Disordered stretches follow at residues 40-77 (VFGK…EEQK) and 124-162 (EMEA…SEEW). Residues 63 to 99 (NRAEKDAEQKIEEQKTLDKAREKLEEKAKLYEKMTKG) adopt a coiled-coil conformation. Composition is skewed to basic and acidic residues over residues 64–77 (RAEK…EEQK) and 124–139 (EMEA…KAGE). S197 bears the Phosphoserine mark. The stretch at 267–309 (LEMLREQTTDQRTKRENIKEKRKAILEARLAKLRQKKMKKSKE) forms a coiled coil. 2 disordered regions span residues 299-363 (LRQK…HIRE) and 378-453 (RQSD…TVTF). A compositionally biased stretch (pro residues) spans 324 to 336 (PLPPEPEAVPTPR). Composition is skewed to basic and acidic residues over residues 348–363 (VQER…HIRE) and 378–389 (RQSDLRAERDPE). Residues 425 to 437 (PDQSHGPSPEHTS) show a composition bias toward polar residues. Residues 439 to 448 (TPAPDNPPQA) show a composition bias toward pro residues.

Widely expressed.

Its subcellular location is the nucleus. In terms of biological role, probably involved in neuronal development. The chain is Coiled-coil domain-containing protein 174 (CCDC174) from Homo sapiens (Human).